A 369-amino-acid polypeptide reads, in one-letter code: Chorismate synthase (369 aa).

Residues Arg-48 and Arg-54 each coordinate NADP(+). FMN contacts are provided by residues 125–127, 238–239, Gly-278, 293–297, and Arg-319; these read RSS, NA, and KPTSS.

Belongs to the chorismate synthase family. As to quaternary structure, homotetramer. FMNH2 serves as cofactor.

The enzyme catalyses 5-O-(1-carboxyvinyl)-3-phosphoshikimate = chorismate + phosphate. It functions in the pathway metabolic intermediate biosynthesis; chorismate biosynthesis; chorismate from D-erythrose 4-phosphate and phosphoenolpyruvate: step 7/7. Functionally, catalyzes the anti-1,4-elimination of the C-3 phosphate and the C-6 proR hydrogen from 5-enolpyruvylshikimate-3-phosphate (EPSP) to yield chorismate, which is the branch point compound that serves as the starting substrate for the three terminal pathways of aromatic amino acid biosynthesis. This reaction introduces a second double bond into the aromatic ring system. This Burkholderia pseudomallei (strain 1106a) protein is Chorismate synthase.